The chain runs to 391 residues: Cystathionine beta-lyase MetC (391 aa).

Lys196 bears the N6-(pyridoxal phosphate)lysine mark.

This sequence belongs to the trans-sulfuration enzymes family. In terms of assembly, homotetramer. The cofactor is pyridoxal 5'-phosphate.

It carries out the reaction L,L-cystathionine + H2O = L-homocysteine + pyruvate + NH4(+). The enzyme catalyses an S-substituted L-cysteine + H2O = a thiol + pyruvate + NH4(+). Its pathway is amino-acid biosynthesis; L-methionine biosynthesis via de novo pathway; L-homocysteine from L-cystathionine: step 1/1. Cystathionine beta-lyase activity is inhibited by sweat components such as glycine, serine and ammonium sulfate. Inhibited by cystathionine at a concentration higher than 6 mM. Functionally, catalyzes the transformation of cystathionine into homocysteine. Can also catalyze, at low levels, the conversion of cystathionine into methionine and the conversion of methionine into methanethiol. This Staphylococcus haemolyticus (strain JCSC1435) protein is Cystathionine beta-lyase MetC.